Reading from the N-terminus, the 167-residue chain is Transcriptional regulator MraZ (167 aa).

SpoVT-AbrB domains follow at residues 8-51 (ESNH…YGDH) and 92-135 (SFPT…NPAT).

This sequence belongs to the MraZ family. As to quaternary structure, forms oligomers.

It is found in the cytoplasm. Its subcellular location is the nucleoid. In Ruegeria pomeroyi (strain ATCC 700808 / DSM 15171 / DSS-3) (Silicibacter pomeroyi), this protein is Transcriptional regulator MraZ.